Here is a 37-residue protein sequence, read N- to C-terminus: Photosystem I reaction center subunit IX (37 aa).

The helical transmembrane segment at 4–24 (FLTTAPVVAAIWFTLTAGILI) threads the bilayer.

It belongs to the PsaJ family.

Its subcellular location is the cellular thylakoid membrane. In terms of biological role, may help in the organization of the PsaE and PsaF subunits. The protein is Photosystem I reaction center subunit IX of Synechococcus sp. (strain WH7803).